A 382-amino-acid polypeptide reads, in one-letter code: D-galactonate dehydratase (382 aa).

Asp183 contributes to the Mg(2+) binding site. Catalysis depends on His185, which acts as the Proton donor. 2 residues coordinate Mg(2+): Glu209 and Glu235. His285 serves as the catalytic Proton acceptor.

Belongs to the mandelate racemase/muconate lactonizing enzyme family. GalD subfamily. Mg(2+) serves as cofactor.

The enzyme catalyses D-galactonate = 2-dehydro-3-deoxy-D-galactonate + H2O. The protein operates within carbohydrate acid metabolism; D-galactonate degradation; D-glyceraldehyde 3-phosphate and pyruvate from D-galactonate: step 1/3. Catalyzes the dehydration of D-galactonate to 2-keto-3-deoxy-D-galactonate. The protein is D-galactonate dehydratase of Salmonella choleraesuis (strain SC-B67).